The primary structure comprises 262 residues: Zinc-finger homeodomain protein 6 (262 aa).

Composition is skewed to basic and acidic residues over residues 1 to 25 (MEVR…DHHR) and 36 to 47 (NKEKPTTKRNGS). A disordered region spans residues 1–93 (MEVREKKDEK…ECQKNHAASS (93 aa)). The ZF-HD dimerization-type; degenerate zinc-finger motif lies at 82 to 131 (YRECQKNHAASSGGHVVDGCGEFMSSGEEGTVESLLCAACDCHRSFHRKE). The homeobox DNA-binding region spans 198–261 (KKRFRTKFNE…NNKQAAKKKD (64 aa)).

In terms of assembly, homo- and heterodimer with other ZFHD proteins. Interacts with MIF1 and MIF3; these interactions prevent nuclear localization and DNA-binding to inhibit transcription regulation activity. Binds to ZHD1, ZHD2, ZHD10 and ZHD11. Expressed in seedlings, roots, leaves, stems, flowers and inflorescence.

It is found in the nucleus. Its function is as follows. Putative transcription factor. In Arabidopsis thaliana (Mouse-ear cress), this protein is Zinc-finger homeodomain protein 6 (ZHD6).